The chain runs to 469 residues: 3-isopropylmalate dehydratase large subunit (469 aa).

[4Fe-4S] cluster-binding residues include Cys347, Cys410, and Cys413.

This sequence belongs to the aconitase/IPM isomerase family. LeuC type 1 subfamily. As to quaternary structure, heterodimer of LeuC and LeuD. [4Fe-4S] cluster is required as a cofactor.

The catalysed reaction is (2R,3S)-3-isopropylmalate = (2S)-2-isopropylmalate. The protein operates within amino-acid biosynthesis; L-leucine biosynthesis; L-leucine from 3-methyl-2-oxobutanoate: step 2/4. Its function is as follows. Catalyzes the isomerization between 2-isopropylmalate and 3-isopropylmalate, via the formation of 2-isopropylmaleate. The polypeptide is 3-isopropylmalate dehydratase large subunit (Burkholderia thailandensis (strain ATCC 700388 / DSM 13276 / CCUG 48851 / CIP 106301 / E264)).